Here is an 85-residue protein sequence, read N- to C-terminus: Large ribosomal subunit protein bL27 (85 aa).

Residues 1-22 (MAHKKAGGSTRNGRDSESKRLG) form a disordered region.

The protein belongs to the bacterial ribosomal protein bL27 family.

This is Large ribosomal subunit protein bL27 from Aliivibrio fischeri (strain ATCC 700601 / ES114) (Vibrio fischeri).